A 2670-amino-acid polypeptide reads, in one-letter code: Inositol 1,4,5-trisphosphate-gated calcium channel ITPR3 (2670 aa).

At 1-2233 (MNEMSSFLHI…YVEGASTGVL (2233 aa)) the chain is on the cytoplasmic side. 5 MIR domains span residues 113-173 (GDVV…LRSN), 174-224 (GDNV…INLF), 232-288 (EEVL…VEVV), 295-372 (GGAG…LDPT), and 378-434 (DSFV…IVSV). The 1D-myo-inositol 1,4,5-trisphosphate site is built by Arg-266, Leu-269, and Arg-270. The 1D-myo-inositol 1,4,5-trisphosphate site is built by Arg-503, Lys-507, Arg-510, Tyr-567, Arg-568, and Lys-569. Position 743 (Arg-743) interacts with Ca(2+). Phosphoserine is present on residues Ser-916 and Ser-934. Residues Glu-1122 and Glu-1125 each contribute to the Ca(2+) site. Basic and acidic residues predominate over residues 1138–1153 (EVEAGATKDKKERPSD). Disordered regions lie at residues 1138-1164 (EVEA…HGEK) and 1807-1835 (NMSD…SFSM). A phosphoserine mark is found at Ser-1813, Ser-1832, and Ser-1834. Ca(2+) is bound by residues Glu-1881 and Glu-1945. The ATP site is built by Ala-1995, Glu-2148, and Lys-2151. Residues 2234–2254 (GSPLISLLFWILICFSIAALF) form a helical membrane-spanning segment. Residues 2255–2262 (TKRYSVRP) are Extracellular-facing. A helical membrane pass occupies residues 2263-2283 (LIVALILRSIYYLGIGPTLNI). The Cytoplasmic portion of the chain corresponds to 2284 to 2292 (LGALNLTNK). The helical transmembrane segment at 2293-2310 (IVFVVSFVGNRGTFIRGY) threads the bilayer. The Extracellular segment spans residues 2311–2324 (KAMVMDMEFLYHVG). The chain crosses the membrane as a helical span at residues 2325 to 2345 (YILTSVLGLFAHELFYSILLF). Topologically, residues 2346 to 2367 (DLIYREETLFNVIKSVTRNGRS) are cytoplasmic. The helical transmembrane segment at 2368–2388 (ILLTALLALILVYLFSIVGFL) threads the bilayer. At 2389 to 2495 (FLKDDFILEV…ESLFPARVVY (107 aa)) the chain is on the extracellular side. Cys-2454 and Cys-2460 form a disulfide bridge. A helical membrane pass occupies residues 2496-2516 (DLLFFFIVIIIVLNLIFGVII). Residues 2517 to 2670 (DTFADLRSEK…FVDVQNCMSR (154 aa)) lie on the Cytoplasmic side of the membrane. Residues Cys-2537 and Phe-2538 each contribute to the ATP site. Cys-2537 lines the Zn(2+) pocket. Positions 2540 and 2557 each coordinate Zn(2+). Residues Lys-2559, His-2562, Asn-2563, and Met-2564 each coordinate ATP. A Zn(2+)-binding site is contributed by His-2562. Thr-2580 is a binding site for Ca(2+). Phosphoserine is present on residues Ser-2608 and Ser-2669.

The protein belongs to the InsP3 receptor family. In terms of assembly, homodimer. Homotetramer. Interacts with TRPC1, TRPC3, TRPC4. Interacts with TRPV4. Interacts with SIGMAR1. Found in a complex with AKT1 and PML; this interaction modulates IP3R3-phosphorylation and in turn ITPR3-dependent calcium release. Interacts with IRAG2 (via coiled-coil domain). Interacts with CABP1. Interacts with TMBIM4/LFG4. Interacts with CEMIP. Interacts with TESPA1. Interacts with TMEM203. Interacts with BOK; regulates ITPR3 expression. Interacts with BCL2L10. Interacts with CHGA and CHGB. In terms of processing, phosphorylated by AKT1 on serine and/or threonine residues.

The protein localises to the endoplasmic reticulum membrane. Its subcellular location is the cytoplasmic vesicle. The protein resides in the secretory vesicle membrane. The enzyme catalyses Ca(2+)(in) = Ca(2+)(out). Inositol 1,4,5-trisphosphate-gated calcium channel is regulated by cytosolic calcium in a biphasic manner. At low concentrations, cytosolic calcium binds at a high-affinity juxtamembrane domain (JD) calcium binding site, allowing ITPR3 to activate by escaping a low-energy resting state through an ensemble of preactivated states. At high cytosolic calcium concentrations, ITPR3 preferentially enters an inhibited state stabilized by calcium binding at a second, low-affinity cytoplasmic domain (CD) calcium binding site. Functionally, inositol 1,4,5-trisphosphate-gated calcium channel that, upon 1D-myo-inositol 1,4,5-trisphosphate binding, transports calcium from the endoplasmic reticulum lumen to cytoplasm, thus releasing the intracellular calcium and therefore participates in cellular calcium ion homeostasis. 1D-myo-inositol 1,4,5-trisphosphate binds to the ligand-free channel without altering its global conformation, yielding the low-energy resting state, then progresses through resting-to preactivated transitions to the higher energy preactivated state, which increases affinity for calcium, promoting binding of the low basal cytosolic calcium at the juxtamembrane domain (JD) site, favoring the transition through the ensemble of high-energy intermediate states along the trajectory to the fully-open activated state. Upon opening, releases calcium in the cytosol where it can bind to the low-affinity cytoplasmic domain (CD) site and stabilizes the inhibited state to terminate calcium release. The polypeptide is Inositol 1,4,5-trisphosphate-gated calcium channel ITPR3 (Mus musculus (Mouse)).